Reading from the N-terminus, the 543-residue chain is CTP synthase (543 aa).

The interval 1–265 (MARYIFITGG…DDEVLAAFAI (265 aa)) is amidoligase domain. S13 lines the CTP pocket. Position 13 (S13) interacts with UTP. 14–19 (SLGKGL) contacts ATP. An L-glutamine-binding site is contributed by Y54. D71 contacts ATP. Mg(2+) is bound by residues D71 and E139. Residues 146 to 148 (DIE), 186 to 191 (KTKPTQ), and K222 each bind CTP. UTP is bound by residues 186–191 (KTKPTQ) and K222. An ATP-binding site is contributed by 238-240 (RDA). The region spanning 291-542 (TIAIVGKYTG…IEAALVRSRL (252 aa)) is the Glutamine amidotransferase type-1 domain. G353 lines the L-glutamine pocket. C380 serves as the catalytic Nucleophile; for glutamine hydrolysis. Residues 381-384 (FGMQ), E404, and R470 each bind L-glutamine. Catalysis depends on residues H515 and E517.

Belongs to the CTP synthase family. Homotetramer.

The enzyme catalyses UTP + L-glutamine + ATP + H2O = CTP + L-glutamate + ADP + phosphate + 2 H(+). The catalysed reaction is L-glutamine + H2O = L-glutamate + NH4(+). It carries out the reaction UTP + NH4(+) + ATP = CTP + ADP + phosphate + 2 H(+). The protein operates within pyrimidine metabolism; CTP biosynthesis via de novo pathway; CTP from UDP: step 2/2. Its activity is regulated as follows. Allosterically activated by GTP, when glutamine is the substrate; GTP has no effect on the reaction when ammonia is the substrate. The allosteric effector GTP functions by stabilizing the protein conformation that binds the tetrahedral intermediate(s) formed during glutamine hydrolysis. Inhibited by the product CTP, via allosteric rather than competitive inhibition. Catalyzes the ATP-dependent amination of UTP to CTP with either L-glutamine or ammonia as the source of nitrogen. Regulates intracellular CTP levels through interactions with the four ribonucleotide triphosphates. In Rhodopseudomonas palustris (strain BisB5), this protein is CTP synthase.